We begin with the raw amino-acid sequence, 480 residues long: Cobyric acid synthase (480 aa).

A GATase cobBQ-type domain is found at 249–436; it reads KLKVVVPVLT…LHGFLDSEAA (188 aa). Cys330 acts as the Nucleophile in catalysis. The active site involves His428.

This sequence belongs to the CobB/CobQ family. CobQ subfamily.

The protein operates within cofactor biosynthesis; adenosylcobalamin biosynthesis. Catalyzes amidations at positions B, D, E, and G on adenosylcobyrinic A,C-diamide. NH(2) groups are provided by glutamine, and one molecule of ATP is hydrogenolyzed for each amidation. This chain is Cobyric acid synthase, found in Vibrio vulnificus (strain YJ016).